The sequence spans 591 residues: MPGGTPRLEGHPFSKTGPDPATPGAATMPDSPADVKTQPRSTPPNMPPPPPAVTQGATRHPSFTPSTMMNGSSHSPTAINGAPSTPNGFSNGPATSSSASLSTHQLPPACGARQLSKLKRFLTTLQQFGNDISPEIGERVRTLVLGLVNSTLTIEEFHAKLQEATNFPLRPFVIPFLKANLPLLQRELLHCARMAKQSPAQYLAQHEQLLLDANASSPIDSSELLLEVSESGKRRTPDRTKENGLDRDPLHPEHLSKRPCTMSPAQRYSPSNGLSHPPNGLPHPPGPPPQHYRLEDMAMAHHYRDAYRHADPRERPRPAVHGARQEEVIDHRLTDREWAEEWKHLNNLLNCIMDMVEKTRRSLTVLRRCQEADREELNHWIRRYSDAEDMKKGSPPSARPHNSSSSSEAPQLDVHRDFAPRPLSGYMPEEIWRKAEEAVNEVKRQAMSELQKAVSDAERKAHELITTERAKMERALAEAKRQASEDALTVINQQEDSSESCWNCGRKASETCSGCNTARYCGSFCQHKDWEKHHHVCGQTLQGLPAPSVPTAVGQPEAVPPMASSPSDAGSAGASRAGTPGTPAPLESASR.

The segment at 1 to 105 (MPGGTPRLEG…SSSASLSTHQ (105 aa)) is disordered. Residues 1–381 (MPGGTPRLEG…ADREELNHWI (381 aa)) form a mediates localization to the nucleus region. Pro residues predominate over residues 41 to 52 (STPPNMPPPPPA). A compositionally biased stretch (polar residues) spans 55–105 (QGATRHPSFTPSTMMNGSSHSPTAINGAPSTPNGFSNGPATSSSASLSTHQ). The TAFH domain occupies 112–207 (ARQLSKLKRF…SPAQYLAQHE (96 aa)). 2 disordered regions span residues 226 to 291 (LEVS…PPQH) and 386 to 420 (DAEDMKKGSPPSARPHNSSSSSEAPQLDVHRDFAP). Positions 230–256 (ESGKRRTPDRTKENGLDRDPLHPEHLS) are enriched in basic and acidic residues. Over residues 263 to 274 (SPAQRYSPSNGL) the composition is skewed to polar residues. Residues 279–290 (NGLPHPPGPPPQ) are compositionally biased toward pro residues. The span at 394–410 (SPPSARPHNSSSSSEAP) shows a compositional bias: low complexity. Positions 433–488 (RKAEEAVNEVKRQAMSELQKAVSDAERKAHELITTERAKMERALAEAKRQASEDAL) form a coiled coil. Zn(2+) is bound by residues Cys-501, Cys-504, Cys-512, Cys-515, Cys-521, Cys-525, His-533, and Cys-537. Residues 501 to 537 (CWNCGRKASETCSGCNTARYCGSFCQHKDWEKHHHVC) form an MYND-type zinc finger. A disordered region spans residues 548-591 (SVPTAVGQPEAVPPMASSPSDAGSAGASRAGTPGTPAPLESASR). Over residues 560–585 (PPMASSPSDAGSAGASRAGTPGTPAP) the composition is skewed to low complexity.

Belongs to the CBFA2T family.

The protein resides in the nucleus. Its subcellular location is the nucleolus. It is found in the nucleoplasm. It localises to the golgi apparatus. Functionally, functions as a transcriptional repressor. Regulates the proliferation and the differentiation of erythroid progenitors. Plays a role in granulocyte differentiation. May also function as an A-kinase-anchoring protein. This is Protein CBFA2T3 (CBFA2T3) from Gallus gallus (Chicken).